Consider the following 462-residue polypeptide: Glycine--tRNA ligase (462 aa).

Substrate-binding residues include R100 and E170. Residues 202–204 (RNE), 212–217 (FRTREF), 287–288 (EL), and 331–334 (GVER) contribute to the ATP site. 217 to 221 (FEQME) lines the substrate pocket. Substrate is bound at residue 327 to 331 (EPSVG).

Belongs to the class-II aminoacyl-tRNA synthetase family. In terms of assembly, homodimer.

The protein localises to the cytoplasm. It carries out the reaction tRNA(Gly) + glycine + ATP = glycyl-tRNA(Gly) + AMP + diphosphate. In terms of biological role, catalyzes the attachment of glycine to tRNA(Gly). This Malacoplasma penetrans (strain HF-2) (Mycoplasma penetrans) protein is Glycine--tRNA ligase.